We begin with the raw amino-acid sequence, 88 residues long: MGSIGWAQLLIIAVIVVLLFGTNKLRTLGSDLGASIKGFKKAMGDDSQTPPTNVDKTSNDADFAKSITEKQQPVAKAEESKSHEKEQG.

Residues 1–21 (MGSIGWAQLLIIAVIVVLLFG) form a helical membrane-spanning segment. The disordered stretch occupies residues 41-88 (KAMGDDSQTPPTNVDKTSNDADFAKSITEKQQPVAKAEESKSHEKEQG). Residues 46–56 (DSQTPPTNVDK) are compositionally biased toward polar residues. The span at 76–88 (KAEESKSHEKEQG) shows a compositional bias: basic and acidic residues.

This sequence belongs to the TatA/E family. The Tat system comprises two distinct complexes: a TatABC complex, containing multiple copies of TatA, TatB and TatC subunits, and a separate TatA complex, containing only TatA subunits. Substrates initially bind to the TatABC complex, which probably triggers association of the separate TatA complex to form the active translocon.

The protein resides in the cell inner membrane. Its function is as follows. Part of the twin-arginine translocation (Tat) system that transports large folded proteins containing a characteristic twin-arginine motif in their signal peptide across membranes. TatA could form the protein-conducting channel of the Tat system. This is Sec-independent protein translocase protein TatA from Yersinia pestis.